The following is a 335-amino-acid chain: Fructose-1,6-bisphosphatase class 1 (335 aa).

Glutamate 92, aspartate 114, leucine 116, and aspartate 117 together coordinate Mg(2+). Substrate-binding positions include 117 to 120 (DGSS), asparagine 209, and lysine 275. Glutamate 281 is a Mg(2+) binding site.

This sequence belongs to the FBPase class 1 family. Homotetramer. Mg(2+) serves as cofactor.

The protein localises to the cytoplasm. The enzyme catalyses beta-D-fructose 1,6-bisphosphate + H2O = beta-D-fructose 6-phosphate + phosphate. The protein operates within carbohydrate biosynthesis; gluconeogenesis. This chain is Fructose-1,6-bisphosphatase class 1, found in Polaromonas sp. (strain JS666 / ATCC BAA-500).